The following is a 175-amino-acid chain: Gamma-crystallin M1 (175 aa).

Beta/gamma crystallin 'Greek key' domains are found at residues 2-40, 41-86, 89-121, and 130-172; these read GKII…RVES, GCFM…RYPY, FRMR…RMSD, and GHWL…RRIT.

This sequence belongs to the beta/gamma-crystallin family. As to quaternary structure, monomer.

Its function is as follows. Crystallins are the dominant structural components of the vertebrate eye lens. The protein is Gamma-crystallin M1 (GM1) of Chiloscyllium indicum (Slender bamboo shark).